The primary structure comprises 495 residues: Cytoplasmic alpha-amylase (495 aa).

Ca(2+) is bound by residues Asn-104 and Asp-198. Residue Asp-235 is the Nucleophile of the active site. Position 239 (His-239) interacts with Ca(2+). Glu-265 functions as the Proton donor in the catalytic mechanism.

This sequence belongs to the glycosyl hydrolase 13 family. In terms of assembly, monomer. Ca(2+) serves as cofactor.

Its subcellular location is the cytoplasm. The catalysed reaction is Endohydrolysis of (1-&gt;4)-alpha-D-glucosidic linkages in polysaccharides containing three or more (1-&gt;4)-alpha-linked D-glucose units.. The protein is Cytoplasmic alpha-amylase (amyA) of Escherichia coli (strain K12).